A 694-amino-acid chain; its full sequence is Katanin p80 WD40 repeat-containing subunit B1 (694 aa).

6 WD repeats span residues 18-58 (AHSS…CIMS), 61-100 (GHTS…ILRT), 103-142 (GHKA…CVFR), 145-186 (GHTQ…TEFT), 188-226 (HTSA…MIGS), and 229-269 (GETG…DVVH). Disordered stretches follow at residues 319-410 (KPIP…PFPA) and 470-492 (TTSA…STGI). Positions 327–349 (ALGTTLRRNYERPTTSCTGQEMK) are enriched in polar residues. The span at 350 to 378 (QSSEADRRSPEGERRSPSSEDEKEDKESS) shows a compositional bias: basic and acidic residues. The span at 470-481 (TTSASSPSRPVV) shows a compositional bias: low complexity. The span at 482–492 (NTTKPKPSTGI) shows a compositional bias: polar residues.

It belongs to the WD repeat KATNB1 family. Interacts with katna1. This interaction enhances the microtubule binding and severing activity of katna1 and also targets this activity to the centrosome.

It localises to the cytoplasm. It is found in the cytoskeleton. The protein localises to the microtubule organizing center. The protein resides in the centrosome. Its subcellular location is the spindle pole. It localises to the spindle. In terms of biological role, participates in a complex which severs microtubules in an ATP-dependent manner. May act to target the enzymatic subunit of this complex to sites of action such as the centrosome. Microtubule severing may promote rapid reorganization of cellular microtubule arrays and the release of microtubules from the centrosome following nucleation. This Danio rerio (Zebrafish) protein is Katanin p80 WD40 repeat-containing subunit B1 (katnb1).